A 334-amino-acid chain; its full sequence is N-acetyl-gamma-glutamyl-phosphate reductase (334 aa).

Residue Cys154 is part of the active site.

This sequence belongs to the NAGSA dehydrogenase family. Type 1 subfamily.

It localises to the cytoplasm. It catalyses the reaction N-acetyl-L-glutamate 5-semialdehyde + phosphate + NADP(+) = N-acetyl-L-glutamyl 5-phosphate + NADPH + H(+). Its pathway is amino-acid biosynthesis; L-arginine biosynthesis; N(2)-acetyl-L-ornithine from L-glutamate: step 3/4. In terms of biological role, catalyzes the NADPH-dependent reduction of N-acetyl-5-glutamyl phosphate to yield N-acetyl-L-glutamate 5-semialdehyde. This chain is N-acetyl-gamma-glutamyl-phosphate reductase, found in Buchnera aphidicola subsp. Acyrthosiphon pisum (strain 5A).